We begin with the raw amino-acid sequence, 371 residues long: 4-hydroxy-3-methylbut-2-en-1-yl diphosphate synthase (flavodoxin) (371 aa).

[4Fe-4S] cluster contacts are provided by Cys269, Cys272, Cys304, and Glu311.

Belongs to the IspG family. [4Fe-4S] cluster is required as a cofactor.

It carries out the reaction (2E)-4-hydroxy-3-methylbut-2-enyl diphosphate + oxidized [flavodoxin] + H2O + 2 H(+) = 2-C-methyl-D-erythritol 2,4-cyclic diphosphate + reduced [flavodoxin]. Its pathway is isoprenoid biosynthesis; isopentenyl diphosphate biosynthesis via DXP pathway; isopentenyl diphosphate from 1-deoxy-D-xylulose 5-phosphate: step 5/6. Functionally, converts 2C-methyl-D-erythritol 2,4-cyclodiphosphate (ME-2,4cPP) into 1-hydroxy-2-methyl-2-(E)-butenyl 4-diphosphate. The chain is 4-hydroxy-3-methylbut-2-en-1-yl diphosphate synthase (flavodoxin) from Acinetobacter baumannii (strain AB307-0294).